We begin with the raw amino-acid sequence, 460 residues long: Phosphoglucosamine mutase (460 aa).

S102 serves as the catalytic Phosphoserine intermediate. Residues S102, D241, D243, and D245 each coordinate Mg(2+). At S102 the chain carries Phosphoserine.

Belongs to the phosphohexose mutase family. Requires Mg(2+) as cofactor. Activated by phosphorylation.

The enzyme catalyses alpha-D-glucosamine 1-phosphate = D-glucosamine 6-phosphate. Its function is as follows. Catalyzes the conversion of glucosamine-6-phosphate to glucosamine-1-phosphate. This Verminephrobacter eiseniae (strain EF01-2) protein is Phosphoglucosamine mutase.